The chain runs to 82 residues: Ferredoxin (82 aa).

The 4Fe-4S ferredoxin-type domain occupies 3 to 31 (KYTIVDKDTCIACGACGAAAPDIYDYDDE). Residues cysteine 12, cysteine 15, cysteine 18, and cysteine 62 each coordinate [4Fe-4S] cluster.

[4Fe-4S] cluster serves as cofactor.

Its function is as follows. Ferredoxins are iron-sulfur proteins that transfer electrons in a wide variety of metabolic reactions. This ferredoxin may act as a phosphodonor to cytochrome P450 BioI. This chain is Ferredoxin (fer), found in Bacillus subtilis (strain 168).